The primary structure comprises 299 residues: Homoserine kinase (299 aa).

88–98 (PLGRGLGSSAT) contacts ATP.

It belongs to the GHMP kinase family. Homoserine kinase subfamily.

Its subcellular location is the cytoplasm. It catalyses the reaction L-homoserine + ATP = O-phospho-L-homoserine + ADP + H(+). Its pathway is amino-acid biosynthesis; L-threonine biosynthesis; L-threonine from L-aspartate: step 4/5. Catalyzes the ATP-dependent phosphorylation of L-homoserine to L-homoserine phosphate. This Gloeobacter violaceus (strain ATCC 29082 / PCC 7421) protein is Homoserine kinase.